The primary structure comprises 370 residues: Homoserine O-acetyltransferase (370 aa).

An AB hydrolase-1 domain is found at 44–350; the sequence is NAILVAHAWT…AYGHDAFLLE (307 aa). S150 acts as the Nucleophile in catalysis. R217 lines the substrate pocket. Residues D311 and H344 contribute to the active site. D345 contributes to the substrate binding site.

Belongs to the AB hydrolase superfamily. MetX family. In terms of assembly, homodimer.

The protein resides in the cytoplasm. It carries out the reaction L-homoserine + acetyl-CoA = O-acetyl-L-homoserine + CoA. It participates in amino-acid biosynthesis; L-methionine biosynthesis via de novo pathway; O-acetyl-L-homoserine from L-homoserine: step 1/1. Transfers an acetyl group from acetyl-CoA to L-homoserine, forming acetyl-L-homoserine. The polypeptide is Homoserine O-acetyltransferase (Geotalea uraniireducens (strain Rf4) (Geobacter uraniireducens)).